The following is a 679-amino-acid chain: Methionine--tRNA ligase (679 aa).

The 'HIGH' region motif lies at 15-25 (PYANGPVHIGH). Zn(2+) contacts are provided by C147, C150, C160, and C163. The 'KMSKS' region motif lies at 332-336 (KISTS). ATP is bound at residue T335. Residues 578-679 (DFMKLDIRVG…KEVKPGSEVK (102 aa)) enclose the tRNA-binding domain.

This sequence belongs to the class-I aminoacyl-tRNA synthetase family. MetG type 1 subfamily. Homodimer. Requires Zn(2+) as cofactor.

It is found in the cytoplasm. The catalysed reaction is tRNA(Met) + L-methionine + ATP = L-methionyl-tRNA(Met) + AMP + diphosphate. Its function is as follows. Is required not only for elongation of protein synthesis but also for the initiation of all mRNA translation through initiator tRNA(fMet) aminoacylation. This Parabacteroides distasonis (strain ATCC 8503 / DSM 20701 / CIP 104284 / JCM 5825 / NCTC 11152) protein is Methionine--tRNA ligase.